Reading from the N-terminus, the 151-residue chain is Ribosome maturation factor RimP (151 aa).

Belongs to the RimP family.

Its subcellular location is the cytoplasm. Required for maturation of 30S ribosomal subunits. The protein is Ribosome maturation factor RimP of Aliivibrio fischeri (strain MJ11) (Vibrio fischeri).